A 350-amino-acid polypeptide reads, in one-letter code: DNA repair protein rhp55 (350 aa).

51-58 is an ATP binding site; that stretch reads GAPGMGKT. Residues 331–350 are disordered; it reads QSIPTNSSQRRKRSILECES.

It belongs to the RecA family. RAD55 subfamily.

The protein resides in the nucleus. Its function is as follows. Required for radiation resistance and meiotic viability and acts in recombination and recombinational DNA repair pathways. This chain is DNA repair protein rhp55 (rhp55), found in Schizosaccharomyces pombe (strain 972 / ATCC 24843) (Fission yeast).